A 557-amino-acid chain; its full sequence is MAKYIFVTGGVASSVGKGITVASIGRLLKARGVRVSVQKLDPYINVDPGTMSPYQHGEVFVTEDGAETDLDLGHYERFIDVNLTRLSNVTTGQIYSAVIQKERRGDYLGGTIQVIPHITNEIKSRIAAVARQTGADVVIVEIGGTVGDIEGLPFLEAIRQMRKDVGRDNVLYIHVTLLPHIGATGEVKTKPTQHSVMELRRVGITADVIVCRSDYPITDEIRDKIALFADVDVEAVVPLHTVDSIYEVPLVLEEAGLGAYLTQRLGLSASRPDLDDWRDLVARIKAPKRKLAIALVGKYVELHDAYISVVEALRHAGLHQGVDVDIRWISSEQIEEEGCEPLLHDVYGIVVPGGFGDRGIEGKIAAAEYARVNNVPYLGLCLGMQVATISFARHIMGPESRANSTEFDLHTPHPVIDFMPDQLDITDKGGTMRLGGYPCKLTPGTRAYAAYGVDVVVERHRHRFEFNNKYRRLFESAGMIVSGQSPDGRLVEIIELRNHPWYVGTQFHPEFQSRPDRPHPLFRDFVAAAAKTFREGDQRPLPLEQNGAVTEHEPHSR.

Positions Met-1–Leu-267 are amidoligase domain. Ser-13 contributes to the CTP binding site. UTP is bound at residue Ser-13. Ser-14–Ile-19 serves as a coordination point for ATP. Position 54 (Tyr-54) interacts with L-glutamine. Position 71 (Asp-71) interacts with ATP. Residues Asp-71 and Glu-141 each coordinate Mg(2+). Residues Asp-148–Glu-150, Lys-188–Gln-193, and Lys-224 contribute to the CTP site. UTP-binding positions include Lys-188 to Gln-193 and Lys-224. A Glutamine amidotransferase type-1 domain is found at Ala-292–Glu-535. Gly-354 is a binding site for L-glutamine. Cys-381 (nucleophile; for glutamine hydrolysis) is an active-site residue. Residues Leu-382 to Gln-385, Glu-406, and Arg-463 contribute to the L-glutamine site. Catalysis depends on residues His-508 and Glu-510. The tract at residues Gly-536 to Arg-557 is disordered.

Belongs to the CTP synthase family. Homotetramer.

It catalyses the reaction UTP + L-glutamine + ATP + H2O = CTP + L-glutamate + ADP + phosphate + 2 H(+). The catalysed reaction is L-glutamine + H2O = L-glutamate + NH4(+). The enzyme catalyses UTP + NH4(+) + ATP = CTP + ADP + phosphate + 2 H(+). The protein operates within pyrimidine metabolism; CTP biosynthesis via de novo pathway; CTP from UDP: step 2/2. With respect to regulation, allosterically activated by GTP, when glutamine is the substrate; GTP has no effect on the reaction when ammonia is the substrate. The allosteric effector GTP functions by stabilizing the protein conformation that binds the tetrahedral intermediate(s) formed during glutamine hydrolysis. Inhibited by the product CTP, via allosteric rather than competitive inhibition. Its function is as follows. Catalyzes the ATP-dependent amination of UTP to CTP with either L-glutamine or ammonia as the source of nitrogen. Regulates intracellular CTP levels through interactions with the four ribonucleotide triphosphates. The sequence is that of CTP synthase from Roseiflexus sp. (strain RS-1).